We begin with the raw amino-acid sequence, 274 residues long: RNA polymerase sigma factor SigI4 (274 aa).

Residues 87–100 carry the Polymerase core binding motif; it reads EEYSVGLMAFNEAI. Residues 226–245 constitute a DNA-binding region (H-T-H motif); it reads LSELMGLVNVHRKTVERNRK.

It belongs to the sigma-70 factor family. SigI subfamily. As to quaternary structure, interacts with RsgI4.

It is found in the cytoplasm. With respect to regulation, negatively regulated by the anti-sigma-I factor RsgI4. Binding of the polysaccharide substrate to RsgI4 may lead to the release and activation of SigI4. In terms of biological role, sigma factors are initiation factors that promote the attachment of RNA polymerase to specific initiation sites and are then released. This sigma factor is involved in regulation of cellulosomal genes via an external polysaccharide-sensing mechanism. The sequence is that of RNA polymerase sigma factor SigI4 from Acetivibrio thermocellus (strain ATCC 27405 / DSM 1237 / JCM 9322 / NBRC 103400 / NCIMB 10682 / NRRL B-4536 / VPI 7372) (Clostridium thermocellum).